We begin with the raw amino-acid sequence, 344 residues long: Heat-inducible transcription repressor HrcA (344 aa).

It belongs to the HrcA family.

Its function is as follows. Negative regulator of class I heat shock genes (grpE-dnaK-dnaJ and groELS operons). Prevents heat-shock induction of these operons. In Geobacillus sp. (strain WCH70), this protein is Heat-inducible transcription repressor HrcA.